Here is an 89-residue protein sequence, read N- to C-terminus: Phytosulfokines 1 (89 aa).

The signal sequence occupies residues 1–22 (MVNPGRTARALCLLCLALLLLG). Residues 23–79 (QDTHSRKLLLQEKHSHGVGNGTTTTQEPSRENGGSTGSNNNGQLQFDSAKWEEFHTD) constitute a propeptide that is removed on maturation. A disordered region spans residues 33–70 (QEKHSHGVGNGTTTTQEPSRENGGSTGSNNNGQLQFDS). N-linked (GlcNAc...) asparagine glycosylation is present at Asn-42. Tyr-80 and Tyr-82 each carry sulfotyrosine. A propeptide spanning residues 85–89 (DVKKP) is cleaved from the precursor.

The protein belongs to the phytosulfokine family. Sulfation is important for activity and for the binding to a putative membrane receptor. In terms of processing, PSK-alpha is produced by endopeptidase digestion. PSK-beta is produced from PSK-alpha by exopeptidase digestion. Expressed throughout the seedling. More abundant in fragments containing shoot or root apexes where cells proliferate vigorously.

It localises to the secreted. Promotes plant cell differentiation, organogenesis and somatic embryogenesis as well as cell proliferation. The chain is Phytosulfokines 1 (PSK1) from Oryza sativa subsp. japonica (Rice).